The primary structure comprises 445 residues: UNC93-like protein MFSD11 (445 aa).

The chain crosses the membrane as a helical span at residues 8 to 28 (LLNIIILGIGFMFMFTAFQTS). N40 carries an N-linked (GlcNAc...) asparagine glycan. The next 4 membrane-spanning stretches (helical) occupy residues 53–73 (AIIY…VAVI), 74–94 (GCQM…AMFI), 98–118 (TWSF…LWTA), and 138–158 (IFWA…YLAW). N-linked (GlcNAc...) asparagine glycosylation occurs at N163. The next 7 membrane-spanning stretches (helical) occupy residues 170-190 (RTVF…FFLI), 239-259 (MLLL…YSGV), 277-297 (LIGL…GLFG), 309-329 (PVVI…YLYM), 345-365 (AFIN…GLGD), 385-405 (APAF…AFFY), and 415-435 (LLIL…VEWG).

It belongs to the unc-93 family.

It is found in the membrane. The chain is UNC93-like protein MFSD11 (mfsd11) from Xenopus tropicalis (Western clawed frog).